We begin with the raw amino-acid sequence, 152 residues long: Ribosome maturation factor RimP (152 aa).

The protein belongs to the RimP family.

It is found in the cytoplasm. Functionally, required for maturation of 30S ribosomal subunits. The chain is Ribosome maturation factor RimP from Yersinia enterocolitica serotype O:8 / biotype 1B (strain NCTC 13174 / 8081).